We begin with the raw amino-acid sequence, 85 residues long: Large ribosomal subunit protein bL27 (85 aa).

This sequence belongs to the bacterial ribosomal protein bL27 family.

In Xylella fastidiosa (strain Temecula1 / ATCC 700964), this protein is Large ribosomal subunit protein bL27.